Reading from the N-terminus, the 69-residue chain is Bowman-Birk type proteinase inhibitor A2 (69 aa).

Disulfide bonds link C12–C31, C18–C29, C38–C45, and C42–C59.

The protein belongs to the Bowman-Birk serine protease inhibitor family. Expressed in bulb (at protein level).

Its function is as follows. Serine protease inhibitor. This Hyacinthus orientalis (Common hyacinth) protein is Bowman-Birk type proteinase inhibitor A2.